Reading from the N-terminus, the 383-residue chain is Subtelomeric hrmA-associated cluster protein AFUB_078970 (383 aa).

Disordered regions lie at residues 118–145 (NPVS…KDDD) and 249–318 (QATQ…SARP). The segment covering 119–134 (PVSEVPESPPSTVKSS) has biased composition (low complexity). Positions 318–364 (PYSAAEDDILQTLVARGLAWEEIEKEFGLRFAKRTMRSLQMRWSRKL) constitute a Myb-like domain.

Its function is as follows. Myb-like domain-containing protein; part of the subtelomeric hrmA-associated cluster (HAC) containing genes that alter the hyphal surface (such as reduced total chitin or increased beta-glucan exposure) and perturb inter-hyphal interactions within the developing biofilms, resulting in a loss of vertically aligned polarized growing filaments. Consequently, this hypoxia-typic morphotype (called H-MORPH) with altered biofilm architecture leads to increased hypoxia fitness, increased host inflammation, rapid disease progression, and mortality in a murine model of invasive aspergillosis. This Aspergillus fumigatus (strain CBS 144.89 / FGSC A1163 / CEA10) (Neosartorya fumigata) protein is Subtelomeric hrmA-associated cluster protein AFUB_078970.